The primary structure comprises 200 residues: Matrix protein (200 aa).

In terms of assembly, homomultimer. Interacts with viral nucleocapsid.

Its subcellular location is the virion membrane. The protein resides in the host endomembrane system. It is found in the host nucleus membrane. In terms of biological role, plays a major role in assembly and budding of virion, by recruiting cellular partners of the ESCRT complexes that play a key role in releasing the budding particle from the host membrane. Condensates the ribonucleocapsid core during virus assembly. This is Matrix protein (M) from Tupaia (TUPV).